The primary structure comprises 794 residues: ATP-dependent RNA helicase SUPV3L1, mitochondrial (794 aa).

The N-terminal 30 residues, 1–30 (MRRCAWPLLRLSSRVGLALRHGGAVRLRQA), are a transit peptide targeting the mitochondrion. One can recognise a Helicase ATP-binding domain in the interval 182-322 (EARAIQRKII…AIDLVTELMY (141 aa)). 195-202 (GPTNSGKT) serves as a coordination point for ATP. A Helicase C-terminal domain is found at 341 to 506 (VLDYALESLD…GLHPTPEQIE (166 aa)). Disordered regions lie at residues 678–741 (EVMS…HGRG) and 764–794 (EWQD…KKKK). Residues 689 to 704 (TKRDARTVSDHRDAKS) show a composition bias toward basic and acidic residues.

Belongs to the helicase family. Requires Mg(2+) as cofactor. Mn(2+) is required as a cofactor.

The protein resides in the nucleus. The protein localises to the mitochondrion matrix. It localises to the mitochondrion nucleoid. The enzyme catalyses ATP + H2O = ADP + phosphate + H(+). Functionally, major helicase player in mitochondrial RNA metabolism. Component of the mitochondrial degradosome (mtEXO) complex, that degrades 3' overhang double-stranded RNA with a 3'-to-5' directionality in an ATP-dependent manner. ATPase and ATP-dependent multisubstrate helicase, able to unwind double-stranded (ds) DNA and RNA, and RNA/DNA heteroduplexes in the 5'-to-3' direction. Plays a role in the RNA surveillance system in mitochondria; regulates the stability of mature mRNAs, the removal of aberrantly formed mRNAs and the rapid degradation of non coding processing intermediates. Also implicated in recombination and chromatin maintenance pathways. May protect cells from apoptosis. Associates with mitochondrial DNA. In Gallus gallus (Chicken), this protein is ATP-dependent RNA helicase SUPV3L1, mitochondrial (SUPV3L1).